Here is a 350-residue protein sequence, read N- to C-terminus: Protein RecA (350 aa).

G80–T87 is a binding site for ATP.

The protein belongs to the RecA family.

The protein localises to the cytoplasm. Functionally, can catalyze the hydrolysis of ATP in the presence of single-stranded DNA, the ATP-dependent uptake of single-stranded DNA by duplex DNA, and the ATP-dependent hybridization of homologous single-stranded DNAs. It interacts with LexA causing its activation and leading to its autocatalytic cleavage. In Chlorobium limicola (strain DSM 245 / NBRC 103803 / 6330), this protein is Protein RecA.